Consider the following 485-residue polypeptide: tRNA sulfurtransferase (485 aa).

The 105-residue stretch at 63–167 (DKLVERLSCM…NELLYLVTAI (105 aa)) folds into the THUMP domain. Residues 185–186 (LI), K267, G289, and Q298 contribute to the ATP site. The cysteines at positions 346 and 458 are disulfide-linked. The region spanning 406–485 (LAENEVILDI…FNNIKVYRQN (80 aa)) is the Rhodanese domain. C458 acts as the Cysteine persulfide intermediate in catalysis.

It belongs to the ThiI family.

It is found in the cytoplasm. The catalysed reaction is [ThiI sulfur-carrier protein]-S-sulfanyl-L-cysteine + a uridine in tRNA + 2 reduced [2Fe-2S]-[ferredoxin] + ATP + H(+) = [ThiI sulfur-carrier protein]-L-cysteine + a 4-thiouridine in tRNA + 2 oxidized [2Fe-2S]-[ferredoxin] + AMP + diphosphate. It carries out the reaction [ThiS sulfur-carrier protein]-C-terminal Gly-Gly-AMP + S-sulfanyl-L-cysteinyl-[cysteine desulfurase] + AH2 = [ThiS sulfur-carrier protein]-C-terminal-Gly-aminoethanethioate + L-cysteinyl-[cysteine desulfurase] + A + AMP + 2 H(+). It participates in cofactor biosynthesis; thiamine diphosphate biosynthesis. Catalyzes the ATP-dependent transfer of a sulfur to tRNA to produce 4-thiouridine in position 8 of tRNAs, which functions as a near-UV photosensor. Also catalyzes the transfer of sulfur to the sulfur carrier protein ThiS, forming ThiS-thiocarboxylate. This is a step in the synthesis of thiazole, in the thiamine biosynthesis pathway. The sulfur is donated as persulfide by IscS. The chain is tRNA sulfurtransferase from Tolumonas auensis (strain DSM 9187 / NBRC 110442 / TA 4).